A 239-amino-acid chain; its full sequence is Large ribosomal subunit protein mL67 (239 aa).

The protein belongs to the mitochondrion-specific ribosomal protein mL67 family. As to quaternary structure, component of the mitochondrial large ribosomal subunit (mt-LSU).

It is found in the nucleus. The protein localises to the mitochondrion. Component of the mitochondrial ribosome (mitoribosome), a dedicated translation machinery responsible for the synthesis of mitochondrial genome-encoded proteins, including at least some of the essential transmembrane subunits of the mitochondrial respiratory chain. The mitoribosomes are attached to the mitochondrial inner membrane and translation products are cotranslationally integrated into the membrane. mL67/MHR1 also has extraribosomal functions, being involved in regulation of mitochondrial DNA recombination, maintenance and repair, and generation of homoplasmic cells. mL67/MHR1 also acts as transcription factor involved in regulation of RNA polymerase II-dependent transcription. This Candida albicans (strain SC5314 / ATCC MYA-2876) (Yeast) protein is Large ribosomal subunit protein mL67 (MHR1).